Consider the following 237-residue polypeptide: 2-C-methyl-D-erythritol 4-phosphate cytidylyltransferase (237 aa).

This sequence belongs to the IspD/TarI cytidylyltransferase family. IspD subfamily.

It catalyses the reaction 2-C-methyl-D-erythritol 4-phosphate + CTP + H(+) = 4-CDP-2-C-methyl-D-erythritol + diphosphate. It functions in the pathway isoprenoid biosynthesis; isopentenyl diphosphate biosynthesis via DXP pathway; isopentenyl diphosphate from 1-deoxy-D-xylulose 5-phosphate: step 2/6. Functionally, catalyzes the formation of 4-diphosphocytidyl-2-C-methyl-D-erythritol from CTP and 2-C-methyl-D-erythritol 4-phosphate (MEP). The protein is 2-C-methyl-D-erythritol 4-phosphate cytidylyltransferase of Paraburkholderia xenovorans (strain LB400).